The sequence spans 429 residues: METQFRRGGLGCSPASIKRKKKREDSGDFGLQVSTMFSEDDFQSTERAPYGPQLQWSQDLPRVQVFREQANLEDRSPRRTQRITGGEQVLWGPITQIFPTVRPADLTRVIMPLEQRSQHCKPEEGLQAQEEDLGLVGAQALQAEEQEAAFFSSTLNVGTLEELPAAESPSPPQSPQEESFSPTAMDAIFGSLSDEGSGSQEKEGPSTSPDLIDPESFSQDILHDKIIDLVHLLLRKYRVKGLITKAEMLGSVIKNYEDYFPEIFREASVCMQLLFGIDVKEVDPTSHSYVLVTSLNLSYDGIQCNEQSMPKSGLLIIVLGVIFMEGNCIPEEVMWEVLSIMGVYAGREHFLFGEPKRLLTQNWVQEKYLVYRQVPGTDPACYEFLWGPRAHAETSKMKVLEYIANANGRDPTSYPSLYEDALREEGEGV.

2 disordered regions span residues 1 to 30 and 188 to 215; these read METQ…GDFG and IFGS…IDPE. Residues 194–209 are compositionally biased toward polar residues; that stretch reads DEGSGSQEKEGPSTSP. The MAGE domain occupies 222–421; sequence LHDKIIDLVH…TSYPSLYEDA (200 aa).

As to expression, expressed in tumors of several types, such as melanoma, head and neck squamous cell carcinoma, lung carcinoma and breast carcinoma. Expressed in testis, ovary, prostate, cancerous prostate, breast and adrenal tissue.

The protein localises to the nucleus. It is found in the cytoplasm. Functionally, acts as androgen receptor coregulator that increases androgen receptor activity by modulating the receptors interdomain interaction. May play a role in embryonal development and tumor transformation or aspects of tumor progression. In Homo sapiens (Human), this protein is Melanoma-associated antigen 11.